Here is a 462-residue protein sequence, read N- to C-terminus: Cytochrome b558/566 subunit A (462 aa).

At 1–8 (MSLKIKSK) the chain is on the cytoplasmic side. Residues 9–26 (ITIGVLLIIFLLSIIFTL) form a helical membrane-spanning segment. Topologically, residues 27–431 (ENVSLAQTSP…TSTSPVTTIS (405 aa)) are extracellular. N-linked (GlcNAc...) asparagine glycosylation is found at asparagine 28, asparagine 65, asparagine 91, asparagine 121, asparagine 144, asparagine 164, asparagine 174, asparagine 183, asparagine 211, asparagine 278, asparagine 279, asparagine 293, asparagine 316, asparagine 339, asparagine 353, and asparagine 376. Residues 432–456 (SAIPPVTLYVTIIGVVVALVALVIL) form a helical membrane-spanning segment. Over 457 to 462 (YVVFRR) the chain is Cytoplasmic.

The cofactor is heme. In terms of processing, N-glycosylated on at least seven Asn residues by identical hexasaccharide units composed of Man, GlcNAc, Glc and 6-deoxy-6-sulfoglucose residues in the molar ration of 2:2:1:1. Post-translationally, O-glycosylated on probably as many as 35 positions by single Man residues.

It is found in the cell membrane. In terms of biological role, monoheme cytochrome whose physiological function is not yet clear. This is Cytochrome b558/566 subunit A (cbsA) from Sulfolobus acidocaldarius (strain ATCC 33909 / DSM 639 / JCM 8929 / NBRC 15157 / NCIMB 11770).